The following is a 196-amino-acid chain: Neuropeptide prohormone-4 (196 aa).

The signal sequence occupies residues 1-25 (MSSPLRMDVTFLLAAIAVTWVCGLK). The region spanning 50–90 (DCDIASPFKCEESPTCLRLFQVCNGRWDCEHGSDEDNALCA) is the LDL-receptor class A domain. Cystine bridges form between Cys-51-Cys-65, Cys-59-Cys-78, and Cys-72-Cys-89.

Expressed by the venom duct.

It localises to the secreted. This is Neuropeptide prohormone-4 from Conus victoriae (Queen Victoria cone).